Consider the following 208-residue polypeptide: Protein-L-isoaspartate O-methyltransferase (208 aa).

Ser-59 is an active-site residue.

This sequence belongs to the methyltransferase superfamily. L-isoaspartyl/D-aspartyl protein methyltransferase family.

The protein resides in the cytoplasm. The catalysed reaction is [protein]-L-isoaspartate + S-adenosyl-L-methionine = [protein]-L-isoaspartate alpha-methyl ester + S-adenosyl-L-homocysteine. Catalyzes the methyl esterification of L-isoaspartyl residues in peptides and proteins that result from spontaneous decomposition of normal L-aspartyl and L-asparaginyl residues. It plays a role in the repair and/or degradation of damaged proteins. The sequence is that of Protein-L-isoaspartate O-methyltransferase from Salmonella arizonae (strain ATCC BAA-731 / CDC346-86 / RSK2980).